Consider the following 31-residue polypeptide: Photosystem II reaction center protein T (31 aa).

A helical transmembrane segment spans residues 3–23 (ALVYTFLLVGTLGIIFFSIFF).

This sequence belongs to the PsbT family. As to quaternary structure, PSII is composed of 1 copy each of membrane proteins PsbA, PsbB, PsbC, PsbD, PsbE, PsbF, PsbH, PsbI, PsbJ, PsbK, PsbL, PsbM, PsbT, PsbY, PsbZ, Psb30/Ycf12, at least 3 peripheral proteins of the oxygen-evolving complex and a large number of cofactors. It forms dimeric complexes.

It is found in the plastid. The protein localises to the chloroplast thylakoid membrane. In terms of biological role, found at the monomer-monomer interface of the photosystem II (PS II) dimer, plays a role in assembly and dimerization of PSII. PSII is a light-driven water plastoquinone oxidoreductase, using light energy to abstract electrons from H(2)O, generating a proton gradient subsequently used for ATP formation. This chain is Photosystem II reaction center protein T, found in Tupiella akineta (Green alga).